The chain runs to 197 residues: uncharacterized protein (197 aa).

Residues 7–27 (PISVGQMVLICIFILIILFVI) traverse the membrane as a helical segment.

It belongs to the IIV-6 307L family.

It localises to the membrane. This is an uncharacterized protein from Acheta domesticus (House cricket).